We begin with the raw amino-acid sequence, 391 residues long: Formate-dependent phosphoribosylglycinamide formyltransferase (391 aa).

Residues 18–19 (EL) and glutamate 78 contribute to the N(1)-(5-phospho-beta-D-ribosyl)glycinamide site. ATP contacts are provided by residues arginine 110, lysine 151, 156–161 (SSGKGQ), 191–194 (EEFI), and glutamate 199. The ATP-grasp domain maps to 115-305 (DLASKDLKIK…EFELHLRAFL (191 aa)). Residues glutamate 264 and glutamate 276 each contribute to the Mg(2+) site. N(1)-(5-phospho-beta-D-ribosyl)glycinamide is bound by residues aspartate 283, lysine 353, and 360–361 (RR).

The protein belongs to the PurK/PurT family. In terms of assembly, homodimer.

The catalysed reaction is N(1)-(5-phospho-beta-D-ribosyl)glycinamide + formate + ATP = N(2)-formyl-N(1)-(5-phospho-beta-D-ribosyl)glycinamide + ADP + phosphate + H(+). Its pathway is purine metabolism; IMP biosynthesis via de novo pathway; N(2)-formyl-N(1)-(5-phospho-D-ribosyl)glycinamide from N(1)-(5-phospho-D-ribosyl)glycinamide (formate route): step 1/1. Involved in the de novo purine biosynthesis. Catalyzes the transfer of formate to 5-phospho-ribosyl-glycinamide (GAR), producing 5-phospho-ribosyl-N-formylglycinamide (FGAR). Formate is provided by PurU via hydrolysis of 10-formyl-tetrahydrofolate. This chain is Formate-dependent phosphoribosylglycinamide formyltransferase, found in Prochlorococcus marinus (strain MIT 9301).